The following is a 329-amino-acid chain: Quinolinate synthase (329 aa).

Iminosuccinate-binding residues include His44 and Ser61. Cys106 contributes to the [4Fe-4S] cluster binding site. Residues 132–134 (YIN) and Ser149 each bind iminosuccinate. A [4Fe-4S] cluster-binding site is contributed by Cys192. Iminosuccinate-binding positions include 218–220 (HPE) and Thr235. Cys285 lines the [4Fe-4S] cluster pocket.

Belongs to the quinolinate synthase family. Type 2 subfamily. It depends on [4Fe-4S] cluster as a cofactor.

It is found in the plastid. The protein resides in the cyanelle. It catalyses the reaction iminosuccinate + dihydroxyacetone phosphate = quinolinate + phosphate + 2 H2O + H(+). The protein operates within cofactor biosynthesis; NAD(+) biosynthesis; quinolinate from iminoaspartate: step 1/1. Catalyzes the condensation of iminoaspartate with dihydroxyacetone phosphate to form quinolinate. The polypeptide is Quinolinate synthase (Cyanophora paradoxa).